A 2944-amino-acid chain; its full sequence is MTLRLLVAALCAGILAEAPRVRAQHRERVTCTRLYAADIVFLLDGSSSIGRSNFREVRSFLEGLVLPFSGAASAQGVRFATVQYSDDPRTEFGLDALGSGGDVIRAIRELSYKGGNTRTGAAILHVADHVFLPQLARPGVPKVCILITDGKSQDLVDTAAQRLKGQGVKLFAVGIKNADPEELKRVASQPTSDFFFFVNDFSILRTLLPLVSRRVCTTAGGVPVTRPPDDSTSAPRDLVLSEPSSQSLRVQWTAASGPVTGYKVQYTPLTGLGQPLPSERQEVNVPAGETSVRLRGLRPLTEYQVTVIALYANSIGEAVSGTARTTALEGPELTIQNTTAHSLLVAWRSVPGATGYRVTWRVLSGGPTQQQELGPGQGSVLLRDLEPGTDYEVTVSTLFGRSVGPATSLMARTDASVEQTLRPVILGPTSILLSWNLVPEARGYRLEWRRETGLEPPQKVVLPSDVTRYQLDGLQPGTEYRLTLYTLLEGHEVATPATVVPTGPELPVSPVTDLQATELPGQRVRVSWSPVPGATQYRIIVRSTQGVERTLVLPGSQTAFDLDDVQAGLSYTVRVSARVGPREGSASVLTVRREPETPLAVPGLRVVVSDATRVRVAWGPVPGASGFRISWSTGSGPESSQTLPPDSTATDITGLQPGTTYQVAVSVLRGREEGPAAVIVARTDPLGPVRTVHVTQASSSSVTITWTRVPGATGYRVSWHSAHGPEKSQLVSGEATVAELDGLEPDTEYTVHVRAHVAGVDGPPASVVVRTAPEPVGRVSRLQILNASSDVLRITWVGVTGATAYRLAWGRSEGGPMRHQILPGNTDSAEIRGLEGGVSYSVRVTALVGDREGTPVSIVVTTPPEAPPALGTLHVVQRGEHSLRLRWEPVPRAQGFLLHWQPEGGQEQSRVLGPELSSYHLDGLEPATQYRVRLSVLGPAGEGPSAEVTARTESPRVPSIELRVVDTSIDSVTLAWTPVSRASSYILSWRPLRGPGQEVPGSPQTLPGISSSQRVTGLEPGVSYIFSLTPVLDGVRGPEASVTQTPVCPRGLADVVFLPHATQDNAHRAEATRRVLERLVLALGPLGPQAVQVGLLSYSHRPSPLFPLNGSHDLGIILQRIRDMPYMDPSGNNLGTAVVTAHRYMLAPDAPGRRQHVPGVMVLLVDEPLRGDIFSPIREAQASGLNVVMLGMAGADPEQLRRLAPGMDSVQTFFAVDDGPSLDQAVSGLATALCQASFTTQPRPEPCPVYCPKGQKGEPGEMGLRGQVGPPGDPGLPGRTGAPGPQGPPGSATAKGERGFPGADGRPGSPGRAGNPGTPGAPGLKGSPGLPGPRGDPGERGPRGPKGEPGAPGQVIGGEGPGLPGRKGDPGPSGPPGPRGPLGDPGPRGPPGLPGTAMKGDKGDRGERGPPGPGEGGIAPGEPGLPGLPGSPGPQGPVGPPGKKGEKGDSEDGAPGLPGQPGSPGEQGPRGPPGAIGPKGDRGFPGPLGEAGEKGERGPPGPAGSRGLPGVAGRPGAKGPEGPPGPTGRQGEKGEPGRPGDPAVVGPAVAGPKGEKGDVGPAGPRGATGVQGERGPPGLVLPGDPGPKGDPGDRGPIGLTGRAGPPGDSGPPGEKGDPGRPGPPGPVGPRGRDGEVGEKGDEGPPGDPGLPGKAGERGLRGAPGVRGPVGEKGDQGDPGEDGRNGSPGSSGPKGDRGEPGPPGPPGRLVDTGPGAREKGEPGDRGQEGPRGPKGDPGLPGAPGERGIEGFRGPPGPQGDPGVRGPAGEKGDRGPPGLDGRSGLDGKPGAAGPSGPNGAAGKAGDPGRDGLPGLRGEQGLPGPSGPPGLPGKPGEDGKPGLNGKNGEPGDPGEDGRKGEKGDSGASGREGRDGPKGERGAPGILGPQGPPGLPGPVGPPGQGFPGVPGGTGPKGDRGETGSKGEQGLPGERGLRGEPGSVPNVDRLLETAGIKASALREIVETWDESSGSFLPVPERRRGPKGDSGEQGPPGKEGPIGFPGERGLKGDRGDPGPQGPPGLALGERGPPGPSGLAGEPGKPGIPGLPGRAGGVGEAGRPGERGERGEKGERGEQGRDGPPGLPGTPGPPGPPGPKVSVDEPGPGLSGEQGPPGLKGAKGEPGSNGDQGPKGDRGVPGIKGDRGEPGPRGQDGNPGLPGERGMAGPEGKPGLQGPRGPPGPVGGHGDPGPPGAPGLAGPAGPQGPSGLKGEPGETGPPGRGLTGPTGAVGLPGPPGPSGLVGPQGSPGLPGQVGETGKPGAPGRDGASGKDGDRGSPGVPGSPGLPGPVGPKGEPGPTGAPGQAVVGLPGAKGEKGAPGGLAGDLVGEPGAKGDRGLPGPRGEKGEAGRAGEPGDPGEDGQKGAPGPKGFKGDPGVGVPGSPGPPGPPGVKGDLGLPGLPGAPGVVGFPGQTGPRGEMGQPGPSGERGLAGPPGREGIPGPLGPPGPPGSVGPPGASGLKGDKGDPGVGLPGPRGERGEPGIRGEDGRPGQEGPRGLTGPPGSRGERGEKGDVGSAGLKGDKGDSAVILGPPGPRGAKGDMGERGPRGLDGDKGPRGDNGDPGDKGSKGEPGDKGSAGLPGLRGLLGPQGQPGAAGIPGDPGSPGKDGVPGIRGEKGDVGFMGPRGLKGERGVKGACGLDGEKGDKGEAGPPGRPGLAGHKGEMGEPGVPGQSGAPGKEGLIGPKGDRGFDGQPGPKGDQGEKGERGTPGIGGFPGPSGNDGSAGPPGPPGSVGPRGPEGLQGQKGERGPPGERVVGAPGVPGAPGERGEQGRPGPAGPRGEKGEAALTEDDIRGFVRQEMSQHCACQGQFIASGSRPLPSYAADTAGSQLHAVPVLRVSHAEEEERVPPEDDEYSEYSEYSVEEYQDPEAPWDSDDPCSLPLDEGSCTAYTLRWYHRAVTGSTEACHPFVYGGCGGNANRFGTREACERRCPPRVVQSQGTGTAQD.

A signal peptide spans 1–16 (MTLRLLVAALCAGILA). Residues 17 to 1253 (EAPRVRAQHR…PEPCPVYCPK (1237 aa)) form a nonhelical region (NC1) region. In terms of domain architecture, VWFA 1 spans 38–211 (DIVFLLDGSS…SILRTLLPLV (174 aa)). 9 Fibronectin type-III domains span residues 234 to 329 (APRD…TALE), 330 to 416 (GPEL…TDAS), 417 to 507 (VEQT…PELP), 510 to 597 (PVTD…EPET), 600 to 687 (AVPG…DPLG), 688 to 775 (PVRT…APEP), 778 to 866 (RVSR…PPEA), 869 to 957 (ALGT…SPRV), and 958 to 1051 (PSIE…CPRG). An N-linked (GlcNAc...) asparagine glycan is attached at Asn-337. The disordered stretch occupies residues 632–651 (STGSGPESSQTLPPDSTATD). Asn-786 is a glycosylation site (N-linked (GlcNAc...) asparagine). In terms of domain architecture, VWFA 2 spans 1054–1229 (DVVFLPHATQ…PSLDQAVSGL (176 aa)). N-linked (GlcNAc...) asparagine glycosylation is present at Asn-1109. 2 consecutive short sequence motifs (cell attachment site) follow at residues 1170 to 1172 (RGD) and 1334 to 1336 (RGD). 3 disordered regions span residues 1239–1941 (TTQP…SVPN), 1963–2782 (WDES…EKGE), and 2837–2872 (SHAE…PWDS). The tract at residues 1254-1477 (GQKGEPGEMG…GPRGPPGAIG (224 aa)) is interrupted collagenous region. The interval 1254 to 2784 (GQKGEPGEMG…GPRGEKGEAA (1531 aa)) is triple-helical region. The segment covering 1336–1346 (DPGERGPRGPK) has biased composition (basic and acidic residues). The span at 1355 to 1365 (VIGGEGPGLPG) shows a compositional bias: gly residues. A compositionally biased stretch (basic and acidic residues) spans 1399-1408 (KGDKGDRGER). Positions 1429-1440 (PGSPGPQGPVGP) are enriched in pro residues. Over residues 1574–1583 (RGPPGLVLPG) the composition is skewed to low complexity. Composition is skewed to basic and acidic residues over residues 1630–1642 (RGRD…KGDE), 1669–1683 (VGEK…EDGR), and 1715–1733 (AREK…RGPK). A compositionally biased stretch (low complexity) spans 1786–1802 (KPGAAGPSGPNGAAGKA). The span at 1852–1877 (EDGRKGEKGDSGASGREGRDGPKGER) shows a compositional bias: basic and acidic residues. The span at 1886–1897 (QGPPGLPGPVGP) shows a compositional bias: pro residues. The segment covering 1898 to 1911 (PGQGFPGVPGGTGP) has biased composition (gly residues). The span at 1974–1984 (PERRRGPKGDS) shows a compositional bias: basic and acidic residues. The Cell attachment site motif lies at 2008 to 2010 (RGD). 4-hydroxyproline occurs at positions 2036 and 2039. The segment covering 2046–2055 (GRAGGVGEAG) has biased composition (gly residues). Residues 2056-2074 (RPGERGERGEKGERGEQGR) show a composition bias toward basic and acidic residues. Positions 2078 to 2092 (PGLPGTPGPPGPPGP) are enriched in pro residues. Pro-2084, Pro-2087, and Pro-2090 each carry 4-hydroxyproline. Residues 2127 to 2143 (PKGDRGVPGIKGDRGEP) show a composition bias toward basic and acidic residues. 4-hydroxyproline occurs at positions 2167, 2176, 2185, and 2188. Composition is skewed to low complexity over residues 2191–2206 (PGLA…SGLK) and 2235–2250 (SGLV…PGQV). A compositionally biased stretch (basic and acidic residues) spans 2328 to 2346 (AKGDRGLPGPRGEKGEAGR). Over residues 2387–2406 (VKGDLGLPGLPGAPGVVGFP) the composition is skewed to low complexity. The span at 2438–2448 (PLGPPGPPGSV) shows a compositional bias: pro residues. Basic and acidic residues-rich tracts occupy residues 2471 to 2486 (RGER…DGRP) and 2534 to 2570 (AKGD…EPGD). A Cell attachment site motif is present at residues 2553-2555 (RGD). A compositionally biased stretch (low complexity) spans 2573–2601 (SAGLPGLRGLLGPQGQPGAAGIPGDPGSP). 5-hydroxylysine; alternate is present on residues Lys-2625 and Lys-2631. Residues Lys-2625 and Lys-2631 are each glycosylated (O-linked (Gal...) hydroxylysine; alternate). Residues Pro-2664, Pro-2667, and Pro-2673 each carry the 4-hydroxyproline modification. The span at 2704–2713 (GTPGIGGFPG) shows a compositional bias: gly residues. The span at 2749-2762 (GERVVGAPGVPGAP) shows a compositional bias: low complexity. A nonhelical region (NC2) region spans residues 2785-2944 (LTEDDIRGFV…QSQGTGTAQD (160 aa)). A compositionally biased stretch (basic and acidic residues) spans 2837-2847 (SHAEEEERVPP). A compositionally biased stretch (acidic residues) spans 2848–2872 (EDDEYSEYSEYSVEEYQDPEAPWDS). The 73-residue stretch at 2872-2944 (SDDPCSLPLD…QSQGTGTAQD (73 aa)) folds into the BPTI/Kunitz inhibitor domain. Disulfide bonds link Cys-2876–Cys-2929, Cys-2885–Cys-2912, and Cys-2904–Cys-2925.

As to quaternary structure, homotrimer. Interacts with MIA3/TANGO1; facilitating its loading into transport carriers and subsequent secretion. Prolines at the third position of the tripeptide repeating unit (G-X-Y) are hydroxylated in some or all of the chains.

Its subcellular location is the secreted. It is found in the extracellular space. The protein resides in the extracellular matrix. The protein localises to the basement membrane. In terms of biological role, stratified squamous epithelial basement membrane protein that forms anchoring fibrils which may contribute to epithelial basement membrane organization and adherence by interacting with extracellular matrix (ECM) proteins such as type IV collagen. The polypeptide is Collagen alpha-1(VII) chain (COL7A1) (Homo sapiens (Human)).